We begin with the raw amino-acid sequence, 431 residues long: Probable sodium/metabolite cotransporter BASS3, chloroplastic (431 aa).

The N-terminal 70 residues, 1-70 (MTLIASLSLP…RRNSGLVPVV (70 aa)), are a transit peptide targeting the chloroplast. The next 9 membrane-spanning stretches (helical) occupy residues 110–130 (FWSA…LSYP), 145–165 (LGGI…ALAF), 169–189 (VPLS…GVLV), 198–218 (TFYA…SSYA), 238–258 (IASV…VVPV), 261–281 (VAMS…GLVL), 288–308 (VVTL…SLCI), 325–345 (LGLI…GYWF), and 387–407 (VPAA…ASFW).

This sequence belongs to the bile acid:sodium symporter (BASS) (TC 2.A.28) family.

The protein localises to the membrane. It is found in the plastid. The protein resides in the chloroplast envelope. Functionally, may function as sodium-coupled metabolite transporter across the chloroplast envelope. The protein is Probable sodium/metabolite cotransporter BASS3, chloroplastic (BASS3) of Arabidopsis thaliana (Mouse-ear cress).